Here is a 313-residue protein sequence, read N- to C-terminus: Synaptophysin (313 aa).

Residues 1–25 (MLLLADMDVVNQLVAGGQFRVVKEP) are Cytoplasmic-facing. An MARVEL domain is found at 21–227 (VVKEPLGFVK…NLWFVFKETG (207 aa)). Residues 26–49 (LGFVKVLQWVFAIFAFATCGSYSG) traverse the membrane as a helical segment. The Vesicular segment spans residues 50 to 106 (ELQLSVDCANKTKSDLNIEVEFEYPFRLHEVYFEAPTCQGDPKKIFLVGNYSSSAEF). An N-linked (GlcNAc...) asparagine glycan is attached at asparagine 59. Residue tyrosine 81 is modified to Phosphotyrosine. N-linked (GlcNAc...) asparagine glycosylation is present at asparagine 99. The chain crosses the membrane as a helical span at residues 107–130 (FVTVAVFAFLYSMGALATYIFLQN). The Cytoplasmic segment spans residues 131-137 (KYRENNK). A helical transmembrane segment spans residues 138–161 (GPMLDFLATAVFAFMWLVSSSAWA). At 162–199 (KGLSDVKMATDPENIIKGMHVCHQPGNTCKELRDPVTS) the chain is on the vesicular side. The helical transmembrane segment at 200-223 (GLNTSVVFGFLNLVLWVGNLWFVF) threads the bilayer. The Cytoplasmic portion of the chain corresponds to 224 to 313 (KETGWAAPFL…GAPTSFSNQM (90 aa)). A disordered region spans residues 238 to 313 (GAPEKQPAPG…GAPTSFSNQM (76 aa)). The span at 253–263 (AGYGQGPGGYG) shows a compositional bias: gly residues. The repeats, Gly/Tyr-rich stretch occupies residues 254 to 304 (GYGQGPGGYGPQDSYGPQGGYQPDYGQPASSGGGGYGPQGDYGQQGYGPQG). Low complexity predominate over residues 264–283 (PQDSYGPQGGYQPDYGQPAS). Over residues 284–302 (SGGGGYGPQGDYGQQGYGP) the composition is skewed to gly residues.

This sequence belongs to the synaptophysin/synaptobrevin family. Homohexamer or homotetramer. Interacts with SRCIN1. Interacts with VAMP2; the interaction is inhibited by interaction of VAPM2 with SEPT8. Ubiquitinated; mediated by SIAH1 or SIAH2 and leading to its subsequent proteasomal degradation. In terms of processing, phosphorylated by SRC. Characteristic of a type of small (30-80 nm) neurosecretory vesicles, including presynaptic vesicles, but also vesicles of various neuroendocrine cells of both neuronal and epithelial phenotype.

Its subcellular location is the cytoplasmic vesicle. It is found in the secretory vesicle. The protein localises to the synaptic vesicle membrane. The protein resides in the synapse. It localises to the synaptosome. Possibly involved in structural functions as organizing other membrane components or in targeting the vesicles to the plasma membrane. Involved in the regulation of short-term and long-term synaptic plasticity. The protein is Synaptophysin (SYP) of Bos taurus (Bovine).